The following is a 246-amino-acid chain: Transcription factor A, mitochondrial (246 aa).

The N-terminal 42 residues, 1–42, are a transit peptide targeting the mitochondrion; sequence MALLRGVWGVLNALGKSGADLCAGCGSRLRYPFSFAYVPKWF. The segment at residues 50-118 is a DNA-binding region (HMG box 1); it reads PKKPMTSYVR…VYKEEINRIQ (69 aa). Serine 56 and serine 61 each carry phosphoserine; by PKA. The residue at position 122 (threonine 122) is a Phosphothreonine. The segment at residues 155–219 is a DNA-binding region (HMG box 2); it reads PKRPRSAYNI…RYYNEMKSWE (65 aa). Serine 160 carries the post-translational modification Phosphoserine; by PKA. 2 positions are modified to phosphoserine: serine 193 and serine 195.

Monomer; binds DNA as a monomer. Homodimer. Component of the mitochondrial transcription initiation complex, composed at least of TFB2M, TFAM and POLRMT. In this complex TFAM recruits POLRMT to the promoter whereas TFB2M induces structural changes in POLRMT to enable promoter opening and trapping of the DNA non-template strand. Upon metabolic stress, forms a complex composed of FOXO3, SIRT3, TFAM and POLRMT. Interacts with TFB1M and TFB2M. Interacts with CLPX; this enhances DNA-binding. Phosphorylation by PKA within the HMG box 1 impairs DNA binding and promotes degradation by the AAA+ Lon protease.

Its subcellular location is the mitochondrion. The protein localises to the mitochondrion matrix. It is found in the mitochondrion nucleoid. In terms of biological role, binds to the mitochondrial light strand promoter and functions in mitochondrial transcription regulation. Component of the mitochondrial transcription initiation complex, composed at least of TFB2M, TFAM and POLRMT that is required for basal transcription of mitochondrial DNA. In this complex, TFAM recruits POLRMT to a specific promoter whereas TFB2M induces structural changes in POLRMT to enable promoter opening and trapping of the DNA non-template strand. Required for accurate and efficient promoter recognition by the mitochondrial RNA polymerase. Promotes transcription initiation from the HSP1 and the light strand promoter by binding immediately upstream of transcriptional start sites. Is able to unwind DNA. Bends the mitochondrial light strand promoter DNA into a U-turn shape via its HMG boxes. Required for maintenance of normal levels of mitochondrial DNA. May play a role in organizing and compacting mitochondrial DNA. The sequence is that of Transcription factor A, mitochondrial from Bos taurus (Bovine).